The chain runs to 101 residues: UPF0235 protein Maeo_0841 (101 aa).

It belongs to the UPF0235 family.

In Methanococcus aeolicus (strain ATCC BAA-1280 / DSM 17508 / OCM 812 / Nankai-3), this protein is UPF0235 protein Maeo_0841.